The primary structure comprises 71 residues: MFTMKKPLLLLFFLGTINLSLCEEERNADEEEKRDGDDEMDAEVEKRFLPAVLKVAAHILPTAICAISRRC.

Positions M1–C22 are cleaved as a signal peptide. Positions E23–E45 are cleaved as a propeptide — removed in mature form. C65 and C71 are disulfide-bonded.

The protein belongs to the frog skin active peptide (FSAP) family. Brevinin subfamily. Expressed by the skin glands.

Its subcellular location is the secreted. Antimicrobial peptide. Active against some Gram-negative and a variety of Gram-positive bacterial strains. Active against fungus C.glabrata 090902 but not against C.albicans ATCC 10231. Shows hemolytic activity against human erythrocytes. The sequence is that of Brevinin-1SN1 from Sylvirana spinulosa (Fine-spined frog).